A 274-amino-acid polypeptide reads, in one-letter code: Long chain fatty acid elongase 6 (274 aa).

Topologically, residues 1–30 (MPQGEVSFFEVLTTAPFSHELSKKHIAQTQ) are extracellular. The chain crosses the membrane as a helical span at residues 31 to 51 (YAAFWISMAYVVVIFGLKAVM). The Cytoplasmic portion of the chain corresponds to 52–69 (TNRKPFDLTGPLNLWNAG). The helical transmembrane segment at 70–90 (LAIFSTLGSLATTFGLLHEFF) threads the bilayer. Over 91–111 (SRGFFESYIHIGDFYNGLSGM) the chain is Extracellular. Residues 112-132 (FTWLFVLSKVAEFGDTLFIIL) traverse the membrane as a helical segment. The Cytoplasmic segment spans residues 133–135 (RKK). A helical membrane pass occupies residues 136-156 (PLMFLHWYHHVLTMNYAFMSF). Residues 157 to 159 (EAN) are Extracellular-facing. Residues 160–180 (LGFNTWITWMNFSVHSIMYGY) form a helical membrane-spanning segment. Topologically, residues 181–202 (YMLRSFGVKVPAWIAKNITTMQ) are cytoplasmic. A helical membrane pass occupies residues 203-223 (ILQFVITHFILFHVGYLAVTG). Topologically, residues 224 to 230 (QSVDSTP) are extracellular. A helical membrane pass occupies residues 231 to 251 (GYYWFCLLMEISYVVLFGNFY). The Cytoplasmic segment spans residues 252 to 274 (YQSYIKGGGKKFNAEKKTEKKIE).

It belongs to the ELO family. In terms of tissue distribution, expressed in the gut, neurons, pharynx and muscles of the vulva.

It is found in the membrane. The enzyme catalyses isopentadecanoyl-CoA + malonyl-CoA + H(+) = 3-oxoisoheptadecanoyl-CoA + CO2 + CoA. Its pathway is lipid metabolism; fatty acid biosynthesis. Catalyzes the first and rate-limiting reaction of the four reactions that constitute the long-chain fatty acids elongation cycle. Uses malonyl-CoA to add 2 carbons per cycle to the chain of long-chain fatty acids. Condensing enzyme required for the formation of isoheptadecanoate (C17iso), which plays critical roles in animal development and growth. In Caenorhabditis elegans, this protein is Long chain fatty acid elongase 6 (elo-6).